The primary structure comprises 286 residues: Putative 2-aminoethylphosphonate transport system permease protein PhnU (286 aa).

Helical transmembrane passes span 19-39 (WLLLPLLVLATLFFWPLSLIV), 76-96 (FFATAGCLLLGSVMSLILVFI), 111-131 (FIALPTFLITLAFTFIYGSAG), 150-170 (FLYSMQGVILAEITVFTPLVM), 202-222 (VIFPAALPALMAGGSLCLLLT), and 254-274 (YTVACMIALINIVLSLGLFSL). Residues 68–275 (LLNTLQIAFF…VLSLGLFSLY (208 aa)) enclose the ABC transmembrane type-1 domain.

The protein belongs to the binding-protein-dependent transport system permease family.

Its subcellular location is the cell inner membrane. In terms of biological role, probably part of the PhnSTUV complex (TC 3.A.1.11.5) involved in 2-aminoethylphosphonate import. Probably responsible for the translocation of the substrate across the membrane. This is Putative 2-aminoethylphosphonate transport system permease protein PhnU (phnU) from Salmonella typhimurium (strain LT2 / SGSC1412 / ATCC 700720).